A 404-amino-acid chain; its full sequence is Alkane 1-monooxygenase 1 (404 aa).

4 helical membrane-spanning segments follow: residues 25 to 45 (HLWILSVLWPATPIIGLYLVS), 47 to 67 (TGWSIWYGLVLILWYGLVPLI), 94 to 114 (VLTYLTVPIHYAALIISAWWV), and 119 to 139 (IGVFEFLALALSLGIVNGLAL). Fe cation-binding residues include histidine 143 and histidine 147. Residues 151-171 (TFDRWMAKLVLAVVGYGHFFI) form a helical membrane-spanning segment. Fe cation-binding residues include histidine 173, histidine 177, and histidine 178. Residues 241–261 (VVLYAALLAFFGPLMLIFLPI) traverse the membrane as a helical segment. Residues histidine 317, histidine 320, and histidine 321 each contribute to the Fe cation site.

The protein belongs to the fatty acid desaturase type 1 family. AlkB subfamily. Requires Fe(3+) as cofactor.

The protein localises to the cell inner membrane. The enzyme catalyses octane + 2 reduced [rubredoxin] + O2 + 2 H(+) = 2 oxidized [rubredoxin] + octan-1-ol + H2O. It functions in the pathway hydrocarbon metabolism; alkane degradation. In terms of biological role, catalyzes the hydroxylation of n-alkanes and fatty acids in the presence of a NADH-rubredoxin reductase and rubredoxin. It preferably hydroxylases C5-C12 hydrocarbons. This Alcanivorax borkumensis (strain ATCC 700651 / DSM 11573 / NCIMB 13689 / SK2) protein is Alkane 1-monooxygenase 1 (alkB1).